The primary structure comprises 184 residues: UPF0301 protein SPO0296 (184 aa).

This sequence belongs to the UPF0301 (AlgH) family.

The protein is UPF0301 protein SPO0296 of Ruegeria pomeroyi (strain ATCC 700808 / DSM 15171 / DSS-3) (Silicibacter pomeroyi).